The chain runs to 707 residues: Polyribonucleotide nucleotidyltransferase (707 aa).

Mg(2+)-binding residues include Asp486 and Asp492. The KH domain occupies 553-612 (PRIHIIKINPEKIKDVIGKGGSVIRMLTEETGTIIEIEDDGTVKISSTVKEKAKNAIRRI). One can recognise an S1 motif domain in the interval 622-690 (GRIYSGKVTR…RQGRLRLSIK (69 aa)).

The protein belongs to the polyribonucleotide nucleotidyltransferase family. As to quaternary structure, component of the RNA degradosome, which is a multiprotein complex involved in RNA processing and mRNA degradation. The cofactor is Mg(2+).

The protein resides in the cytoplasm. It catalyses the reaction RNA(n+1) + phosphate = RNA(n) + a ribonucleoside 5'-diphosphate. Its function is as follows. Involved in mRNA degradation. Catalyzes the phosphorolysis of single-stranded polyribonucleotides processively in the 3'- to 5'-direction. This is Polyribonucleotide nucleotidyltransferase from Buchnera aphidicola subsp. Acyrthosiphon pisum (strain 5A).